The following is a 385-amino-acid chain: tRNA-specific 2-thiouridylase MnmA (385 aa).

Residues 12–19 and M38 each bind ATP; that span reads GLSGGVDS. The tract at residues 108-110 is interaction with target base in tRNA; sequence NPD. Residue C113 is the Nucleophile of the active site. The cysteines at positions 113 and 210 are disulfide-linked. G138 is an ATP binding site. The interaction with tRNA stretch occupies residues 160-162; it reads KDQ. C210 (cysteine persulfide intermediate) is an active-site residue.

The protein belongs to the MnmA/TRMU family.

Its subcellular location is the cytoplasm. It catalyses the reaction S-sulfanyl-L-cysteinyl-[protein] + uridine(34) in tRNA + AH2 + ATP = 2-thiouridine(34) in tRNA + L-cysteinyl-[protein] + A + AMP + diphosphate + H(+). Catalyzes the 2-thiolation of uridine at the wobble position (U34) of tRNA, leading to the formation of s(2)U34. The protein is tRNA-specific 2-thiouridylase MnmA of Ureaplasma parvum serovar 3 (strain ATCC 27815 / 27 / NCTC 11736).